The chain runs to 315 residues: Voltage-dependent calcium channel gamma-3 subunit (315 aa).

4 consecutive transmembrane segments (helical) span residues 8 to 28 (IQML…TIAV), 104 to 124 (SSVF…CVAA), 135 to 155 (ILSA…GIIV), and 181 to 201 (FGAF…HIYI). The disordered stretch occupies residues 232 to 253 (RRRSSSRSTEPRSRDLSPISKG). Phosphoserine is present on serine 248.

This sequence belongs to the PMP-22/EMP/MP20 family. CACNG subfamily. As to quaternary structure, the L-type calcium channel is composed of five subunits: alpha-1, alpha-2/delta, beta and gamma. Acts as an auxiliary subunit for AMPA-selective glutamate receptors (AMPARs). Found in a complex with GRIA1, GRIA2, GRIA3, GRIA4, CNIH2, CNIH3, CACNG2, CACNG4, CACNG5, CACNG7 and CACNG8. Interacts with AP4M1 and GRIA1; associates GRIA1 with the adaptor protein complex 4 (AP-4) to target GRIA1 to the somatodendritic compartment of neurons.

It is found in the membrane. Its function is as follows. Regulates the trafficking to the somatodendritic compartment and gating properties of AMPA-selective glutamate receptors (AMPARs). Promotes their targeting to the cell membrane and synapses and modulates their gating properties by slowing their rates of activation, deactivation and desensitization. Does not show subunit-specific AMPA receptor regulation and regulates all AMPAR subunits. Thought to stabilize the calcium channel in an inactivated (closed) state. The protein is Voltage-dependent calcium channel gamma-3 subunit (Cacng3) of Mus musculus (Mouse).